Consider the following 571-residue polypeptide: Potassium-transporting ATPase potassium-binding subunit (571 aa).

The next 11 membrane-spanning stretches (helical) occupy residues 5–25 (GWIQ…PLGS), 64–84 (LAYT…LYAI), 136–156 (GLTH…VALI), 179–199 (LYVL…QGIP), 254–274 (LSNL…TNVF), 285–305 (WAIL…TYWA), 330–350 (FGIA…CGAV), 357–376 (FTAL…EIII), 421–441 (MLGI…ATVV), 488–508 (LAIG…AIAG), and 527–547 (GGLF…LTFF).

Belongs to the KdpA family. In terms of assembly, the system is composed of three essential subunits: KdpA, KdpB and KdpC.

The protein resides in the cell inner membrane. Part of the high-affinity ATP-driven potassium transport (or Kdp) system, which catalyzes the hydrolysis of ATP coupled with the electrogenic transport of potassium into the cytoplasm. This subunit binds the periplasmic potassium ions and delivers the ions to the membrane domain of KdpB through an intramembrane tunnel. The chain is Potassium-transporting ATPase potassium-binding subunit from Methylobacterium radiotolerans (strain ATCC 27329 / DSM 1819 / JCM 2831 / NBRC 15690 / NCIMB 10815 / 0-1).